The sequence spans 400 residues: Homoserine O-acetyltransferase (400 aa).

The region spanning 64–374 (NAILVCHALT…DKGHDAFLLD (311 aa)) is the AB hydrolase-1 domain. Catalysis depends on Ser169, which acts as the Nucleophile. Residue Arg239 participates in substrate binding. Residues Asp335 and His368 contribute to the active site. Asp369 contributes to the substrate binding site.

It belongs to the AB hydrolase superfamily. MetX family. As to quaternary structure, homodimer.

It localises to the cytoplasm. It carries out the reaction L-homoserine + acetyl-CoA = O-acetyl-L-homoserine + CoA. Its pathway is amino-acid biosynthesis; L-methionine biosynthesis via de novo pathway; O-acetyl-L-homoserine from L-homoserine: step 1/1. Functionally, transfers an acetyl group from acetyl-CoA to L-homoserine, forming acetyl-L-homoserine. The polypeptide is Homoserine O-acetyltransferase (Rhodopseudomonas palustris (strain ATCC BAA-98 / CGA009)).